An 860-amino-acid polypeptide reads, in one-letter code: Transforming growth factor-beta receptor-associated protein 1 (860 aa).

Residues 24–297 (HISIECVECC…HILQDFEGRV (274 aa)) enclose the CNH domain. One copy of the CHCR repeat lies at 564–732 (RPLDEQQQTS…YLRAGPSAQD (169 aa)).

It belongs to the TRAP1 family. Interacts with TGFBR2 and ACVR2B; in the absence of ligand stimulation. Interacts with TGFBR1, ACVRL1, BMPR1A and ACVR1B; in the absence of ligand stimulation and to a less extent. Interacts with SMAD4; the interaction seems to be mutually exclusive with the interaction of SMAD4 and phosphorylated SMAD2. May interact with ALOX5. Interacts with RAB5C. Interacts with VPS8, VPS11 and VPS16. Component of the putative class C core vacuole/endosome tethering (CORVET) complex; the core of which composed of the class C Vps proteins VPS11, VPS16, VPS18 and VPS33A, is associated with VPS8 and TGFBRAP1.

Its subcellular location is the cytoplasm. The protein localises to the early endosome. Its function is as follows. Plays a role in the TGF-beta/activin signaling pathway. It associates with inactive heteromeric TGF-beta and activin receptor complexes, mainly through the type II receptor, and is released upon activation of signaling. May recruit SMAD4 to the vicinity of the receptor complex and facilitate its interaction with receptor-regulated Smads, such as SMAD2. Plays a role in vesicle-mediated protein trafficking of the endocytic membrane transport pathway. Believed to act as a component of the putative CORVET endosomal tethering complexes which is proposed to be involved in the Rab5-to-Rab7 endosome conversion probably implicating MON1A/B, and via binding SNAREs and SNARE complexes to mediate tethering and docking events during SNARE-mediated membrane fusion. The CORVET complex is proposed to function as a Rab5 effector to mediate early endosome fusion probably in specific endosome subpopulations. Functions predominantly in APPL1-containing endosomes and in degradative but not recycling trafficking of endocytosed cargo. This is Transforming growth factor-beta receptor-associated protein 1 (Tgfbrap1) from Mus musculus (Mouse).